The chain runs to 416 residues: UDP-N-acetylglucosamine 1-carboxyvinyltransferase (416 aa).

Position 22 to 23 (22 to 23) interacts with phosphoenolpyruvate; the sequence is KN. Arginine 91 contributes to the UDP-N-acetyl-alpha-D-glucosamine binding site. Cysteine 115 acts as the Proton donor in catalysis. Position 115 is a 2-(S-cysteinyl)pyruvic acid O-phosphothioketal (cysteine 115). UDP-N-acetyl-alpha-D-glucosamine-binding positions include 120 to 124, aspartate 303, and isoleucine 325; that span reads RPVDL.

Belongs to the EPSP synthase family. MurA subfamily.

The protein localises to the cytoplasm. It catalyses the reaction phosphoenolpyruvate + UDP-N-acetyl-alpha-D-glucosamine = UDP-N-acetyl-3-O-(1-carboxyvinyl)-alpha-D-glucosamine + phosphate. It functions in the pathway cell wall biogenesis; peptidoglycan biosynthesis. Its function is as follows. Cell wall formation. Adds enolpyruvyl to UDP-N-acetylglucosamine. In Oleidesulfovibrio alaskensis (strain ATCC BAA-1058 / DSM 17464 / G20) (Desulfovibrio alaskensis), this protein is UDP-N-acetylglucosamine 1-carboxyvinyltransferase.